A 150-amino-acid chain; its full sequence is Avidin-related protein 1 (150 aa).

The signal sequence occupies residues 1–24 (MVHATSPLLLLLLLSLALVAPGLS). An Avidin-like domain is found at 26-147 (RKCSLTGKWD…GNNDFTRQRT (122 aa)). A disulfide bridge connects residues cysteine 28 and cysteine 105. Biotin contacts are provided by asparagine 36 and serine 40. N-linked (GlcNAc...) asparagine glycosylation occurs at asparagine 54. Residues tyrosine 57, threonine 59, and aspartate 63 each coordinate biotin. Residues asparagine 67 and asparagine 93 are each glycosylated (N-linked (GlcNAc...) asparagine). Residues serine 95, serine 99, and asparagine 140 each coordinate biotin.

The protein belongs to the avidin/streptavidin family. As to quaternary structure, homotetramer. In terms of processing, glycosylated.

Its subcellular location is the secreted. In terms of biological role, forms a strong non-covalent specific complex with biotin. This chain is Avidin-related protein 1 (AVR1), found in Gallus gallus (Chicken).